Here is a 367-residue protein sequence, read N- to C-terminus: Holliday junction branch migration complex subunit RuvB (367 aa).

A large ATPase domain (RuvB-L) region spans residues 2 to 196 (TDEPLTDRPP…FGFTARLDFY (195 aa)). ATP is bound by residues L35, R36, G77, K80, T81, T82, 143-145 (EDF), R186, Y196, and R233. T81 is a binding site for Mg(2+). The segment at 197-267 (EPADLERIVH…VAQAALAVYE (71 aa)) is small ATPAse domain (RuvB-S). The head domain (RuvB-H) stretch occupies residues 270-367 (EHGLDRLDRA…IDRDAGEPTA (98 aa)). Residues R325 and R330 each contribute to the DNA site.

This sequence belongs to the RuvB family. Homohexamer. Forms an RuvA(8)-RuvB(12)-Holliday junction (HJ) complex. HJ DNA is sandwiched between 2 RuvA tetramers; dsDNA enters through RuvA and exits via RuvB. An RuvB hexamer assembles on each DNA strand where it exits the tetramer. Each RuvB hexamer is contacted by two RuvA subunits (via domain III) on 2 adjacent RuvB subunits; this complex drives branch migration. In the full resolvosome a probable DNA-RuvA(4)-RuvB(12)-RuvC(2) complex forms which resolves the HJ.

Its subcellular location is the cytoplasm. The enzyme catalyses ATP + H2O = ADP + phosphate + H(+). Its function is as follows. The RuvA-RuvB-RuvC complex processes Holliday junction (HJ) DNA during genetic recombination and DNA repair, while the RuvA-RuvB complex plays an important role in the rescue of blocked DNA replication forks via replication fork reversal (RFR). RuvA specifically binds to HJ cruciform DNA, conferring on it an open structure. The RuvB hexamer acts as an ATP-dependent pump, pulling dsDNA into and through the RuvAB complex. RuvB forms 2 homohexamers on either side of HJ DNA bound by 1 or 2 RuvA tetramers; 4 subunits per hexamer contact DNA at a time. Coordinated motions by a converter formed by DNA-disengaged RuvB subunits stimulates ATP hydrolysis and nucleotide exchange. Immobilization of the converter enables RuvB to convert the ATP-contained energy into a lever motion, pulling 2 nucleotides of DNA out of the RuvA tetramer per ATP hydrolyzed, thus driving DNA branch migration. The RuvB motors rotate together with the DNA substrate, which together with the progressing nucleotide cycle form the mechanistic basis for DNA recombination by continuous HJ branch migration. Branch migration allows RuvC to scan DNA until it finds its consensus sequence, where it cleaves and resolves cruciform DNA. The protein is Holliday junction branch migration complex subunit RuvB of Acidothermus cellulolyticus (strain ATCC 43068 / DSM 8971 / 11B).